The chain runs to 1141 residues: Probable ubiquitin carboxyl-terminal hydrolase 2 (1141 aa).

At Thr112 the chain carries Phosphothreonine. The residue at position 113 (Ser113) is a Phosphoserine. Thr115 bears the Phosphothreonine mark. In terms of domain architecture, USP spans Ile614–Lys1124. Cys623 acts as the Nucleophile in catalysis. A Phosphothreonine modification is found at Thr721. At Ser722 the chain carries Phosphoserine. The tract at residues Glu748–Ser770 is disordered. His1076 functions as the Proton acceptor in the catalytic mechanism.

It belongs to the peptidase C19 family.

The catalysed reaction is Thiol-dependent hydrolysis of ester, thioester, amide, peptide and isopeptide bonds formed by the C-terminal Gly of ubiquitin (a 76-residue protein attached to proteins as an intracellular targeting signal).. This is Probable ubiquitin carboxyl-terminal hydrolase 2 (ubp2) from Schizosaccharomyces pombe (strain 972 / ATCC 24843) (Fission yeast).